The sequence spans 514 residues: Tryptophan decarboxylase 1 (514 aa).

Phe-104 serves as a coordination point for serotonin. Pyridoxal 5'-phosphate contacts are provided by Thr-175 and Ser-176. Serotonin is bound at residue His-214. Thr-273 contributes to the pyridoxal 5'-phosphate binding site. An N6-(pyridoxal phosphate)lysine modification is found at Lys-330. The Proton donor role is filled by Tyr-359. Residues Val-380 and Gly-381 each coordinate pyridoxal 5'-phosphate.

The protein belongs to the group II decarboxylase family. As to quaternary structure, forms homodimers. Pyridoxal 5'-phosphate is required as a cofactor.

The enzyme catalyses L-tryptophan + H(+) = tryptamine + CO2. It catalyses the reaction 5-hydroxy-L-tryptophan + H(+) = serotonin + CO2. Functionally, involved in serotonin biosynthesis. Catalyzes the decarboxylation of L-tryptophan to produce tryptamine, which is converted to serotonin by tryptamine 5-hydroxylase. May play a major role in serotonin biosynthesis during senescence. Accumulation of serotonin attenuates leaf senescence. Catalyzes the decarboxylation of 5-hydroxy-L-tryptophan to produce serotonin. In Oryza sativa subsp. japonica (Rice), this protein is Tryptophan decarboxylase 1.